Consider the following 477-residue polypeptide: MSPQTETKASVGFKAGVKEYKLTYYTPEYQTKDTDILAAFRVTPQPGVPPEEAGAAVAAESSTGTWTTVWTDGLTSLDRYKGRCYRIERVVGEKDQYIAYVAYPLDLFEEGSVTNMFTSIVGNVFGFKALRALRLEDLRIPPAYVKTFQGPPHGIQVERDKLNKYGRPLLGCTIKPKLGLSAKNYGRAVYECLRGGLDFTKDDENVNSQPFMRWRDRFLFCAEALFKAQTETGEIKGHYLNATAGTCEEMIKRAVFARELGVPIVMHDYLTGGFTANTTLAHYCRDNGLLLHIHRAMHAVIDRQKNHGIHFRVLAKALRMSGGDHIHSGTVVGKLEGERDITLGFVDLLRDDFVEQDRSRGIYFTQDWVSLPGVLPVASGGIHVWHMPALTEIFGDDSVLQFGGGTLGHPWGNAPGAVANRVALEACVKARNEGRDLAREGNEIIREACKWSPELAAACEVWKEIVFNFAAVDVLDK.

Positions 1 to 2 are excised as a propeptide; that stretch reads MS. The residue at position 3 (Pro-3) is an N-acetylproline. N6,N6,N6-trimethyllysine is present on Lys-14. 2 residues coordinate substrate: Asn-123 and Thr-173. Lys-175 (proton acceptor) is an active-site residue. Position 177 (Lys-177) interacts with substrate. The Mg(2+) site is built by Lys-201, Asp-203, and Glu-204. N6-carboxylysine is present on Lys-201. Residue His-294 is the Proton acceptor of the active site. Substrate contacts are provided by Arg-295, His-327, and Ser-379.

Belongs to the RuBisCO large chain family. Type I subfamily. As to quaternary structure, heterohexadecamer of 8 large chains and 8 small chains; disulfide-linked. The disulfide link is formed within the large subunit homodimers. Mg(2+) is required as a cofactor. In terms of processing, the disulfide bond which can form in the large chain dimeric partners within the hexadecamer appears to be associated with oxidative stress and protein turnover.

Its subcellular location is the plastid. The protein resides in the chloroplast. It catalyses the reaction 2 (2R)-3-phosphoglycerate + 2 H(+) = D-ribulose 1,5-bisphosphate + CO2 + H2O. The catalysed reaction is D-ribulose 1,5-bisphosphate + O2 = 2-phosphoglycolate + (2R)-3-phosphoglycerate + 2 H(+). Its function is as follows. RuBisCO catalyzes two reactions: the carboxylation of D-ribulose 1,5-bisphosphate, the primary event in carbon dioxide fixation, as well as the oxidative fragmentation of the pentose substrate in the photorespiration process. Both reactions occur simultaneously and in competition at the same active site. This chain is Ribulose bisphosphate carboxylase large chain (rbcL), found in Solanum lycopersicum (Tomato).